Reading from the N-terminus, the 140-residue chain is ATP synthase epsilon chain (140 aa).

It belongs to the ATPase epsilon chain family. In terms of assembly, F-type ATPases have 2 components, CF(1) - the catalytic core - and CF(0) - the membrane proton channel. CF(1) has five subunits: alpha(3), beta(3), gamma(1), delta(1), epsilon(1). CF(0) has three main subunits: a, b and c.

Its subcellular location is the cell inner membrane. Produces ATP from ADP in the presence of a proton gradient across the membrane. The sequence is that of ATP synthase epsilon chain from Laribacter hongkongensis (strain HLHK9).